A 106-amino-acid polypeptide reads, in one-letter code: MSQESDHGSGDGLALQEAQPKVKRPPLYKVMLLNDDFTPMEFVVHVLMLFFGMNEEKATQVMLHVHTRGVGVCGVFSKDVAETKVQQVNAHARQNQHPLLCTMEEA.

The protein belongs to the ClpS family. As to quaternary structure, binds to the N-terminal domain of the chaperone ClpA.

In terms of biological role, involved in the modulation of the specificity of the ClpAP-mediated ATP-dependent protein degradation. This is ATP-dependent Clp protease adapter protein ClpS from Methylococcus capsulatus (strain ATCC 33009 / NCIMB 11132 / Bath).